Here is a 127-residue protein sequence, read N- to C-terminus: Large ribosomal subunit protein bL20 (127 aa).

The protein belongs to the bacterial ribosomal protein bL20 family.

In terms of biological role, binds directly to 23S ribosomal RNA and is necessary for the in vitro assembly process of the 50S ribosomal subunit. It is not involved in the protein synthesizing functions of that subunit. This Bifidobacterium adolescentis (strain ATCC 15703 / DSM 20083 / NCTC 11814 / E194a) protein is Large ribosomal subunit protein bL20.